The sequence spans 352 residues: Heat-inducible transcription repressor HrcA (352 aa).

It belongs to the HrcA family.

Negative regulator of class I heat shock genes (grpE-dnaK-dnaJ and groELS operons). Prevents heat-shock induction of these operons. The polypeptide is Heat-inducible transcription repressor HrcA (Lactobacillus gasseri (strain ATCC 33323 / DSM 20243 / BCRC 14619 / CIP 102991 / JCM 1131 / KCTC 3163 / NCIMB 11718 / NCTC 13722 / AM63)).